A 196-amino-acid chain; its full sequence is Ribonuclease HII (196 aa).

The RNase H type-2 domain occupies 9–196 (NLIAGVDEVG…APVKRALNLV (188 aa)). The a divalent metal cation site is built by Asp-15, Glu-16, and Asp-107.

This sequence belongs to the RNase HII family. The cofactor is Mn(2+). It depends on Mg(2+) as a cofactor.

Its subcellular location is the cytoplasm. It carries out the reaction Endonucleolytic cleavage to 5'-phosphomonoester.. Its function is as follows. Endonuclease that specifically degrades the RNA of RNA-DNA hybrids. The protein is Ribonuclease HII of Proteus mirabilis (strain HI4320).